The chain runs to 233 residues: 2-C-methyl-D-erythritol 4-phosphate cytidylyltransferase (233 aa).

It belongs to the IspD/TarI cytidylyltransferase family. IspD subfamily.

It carries out the reaction 2-C-methyl-D-erythritol 4-phosphate + CTP + H(+) = 4-CDP-2-C-methyl-D-erythritol + diphosphate. The protein operates within isoprenoid biosynthesis; isopentenyl diphosphate biosynthesis via DXP pathway; isopentenyl diphosphate from 1-deoxy-D-xylulose 5-phosphate: step 2/6. In terms of biological role, catalyzes the formation of 4-diphosphocytidyl-2-C-methyl-D-erythritol from CTP and 2-C-methyl-D-erythritol 4-phosphate (MEP). This is 2-C-methyl-D-erythritol 4-phosphate cytidylyltransferase from Geotalea uraniireducens (strain Rf4) (Geobacter uraniireducens).